The primary structure comprises 129 residues: Small ribosomal subunit protein bS18c (129 aa).

Residues 1–20 (MGTSNTQKPQKQVPKRKKYK) are disordered.

Belongs to the bacterial ribosomal protein bS18 family. As to quaternary structure, part of the 30S ribosomal subunit.

The protein localises to the plastid. The protein resides in the chloroplast. The chain is Small ribosomal subunit protein bS18c from Stigeoclonium helveticum (Green alga).